Reading from the N-terminus, the 453-residue chain is Chromosomal replication initiator protein DnaA (453 aa).

Residues 1 to 73 (MSKEEIWDKV…ADLIEKAIGT (73 aa)) form a domain I, interacts with DnaA modulators region. Positions 73–114 (TKLMPNFVIQEDLTEDKQVKDSAKAKSEAKPDVQAPQNSSED) are domain II. The span at 91 to 103 (VKDSAKAKSEAKP) shows a compositional bias: basic and acidic residues. A disordered region spans residues 91–113 (VKDSAKAKSEAKPDVQAPQNSSE). A domain III, AAA+ region region spans residues 115 to 331 (QFNVHNTFET…GALTRVIAYS (217 aa)). Residues glycine 159, glycine 161, lysine 162, and threonine 163 each contribute to the ATP site. A domain IV, binds dsDNA region spans residues 332-453 (RLQNEAITTE…ENLEKEIRNQ (122 aa)).

The protein belongs to the DnaA family. In terms of assembly, oligomerizes as a right-handed, spiral filament on DNA at oriC.

It is found in the cytoplasm. In terms of biological role, plays an essential role in the initiation and regulation of chromosomal replication. ATP-DnaA binds to the origin of replication (oriC) to initiate formation of the DNA replication initiation complex once per cell cycle. Binds the DnaA box (a 9 base pair repeat at the origin) and separates the double-stranded (ds)DNA. Forms a right-handed helical filament on oriC DNA; dsDNA binds to the exterior of the filament while single-stranded (ss)DNA is stabiized in the filament's interior. The ATP-DnaA-oriC complex binds and stabilizes one strand of the AT-rich DNA unwinding element (DUE), permitting loading of DNA polymerase. After initiation quickly degrades to an ADP-DnaA complex that is not apt for DNA replication. Binds acidic phospholipids. The chain is Chromosomal replication initiator protein DnaA from Staphylococcus carnosus (strain TM300).